A 168-amino-acid polypeptide reads, in one-letter code: S-ribosylhomocysteine lyase (168 aa).

Residues His54, His58, and Cys128 each contribute to the Fe cation site.

The protein belongs to the LuxS family. In terms of assembly, homodimer. Fe cation is required as a cofactor.

The enzyme catalyses S-(5-deoxy-D-ribos-5-yl)-L-homocysteine = (S)-4,5-dihydroxypentane-2,3-dione + L-homocysteine. Its function is as follows. Involved in the synthesis of autoinducer 2 (AI-2) which is secreted by bacteria and is used to communicate both the cell density and the metabolic potential of the environment. The regulation of gene expression in response to changes in cell density is called quorum sensing. Catalyzes the transformation of S-ribosylhomocysteine (RHC) to homocysteine (HC) and 4,5-dihydroxy-2,3-pentadione (DPD). The polypeptide is S-ribosylhomocysteine lyase (Neisseria meningitidis serogroup A / serotype 4A (strain DSM 15465 / Z2491)).